The primary structure comprises 794 residues: uncharacterized protein (794 aa).

The first 22 residues, 1–22 (MKLKYGTIIFSGLLGVSAILAA), serve as a signal peptide directing secretion. The N-palmitoyl cysteine moiety is linked to residue Cys23. Residue Cys23 is the site of S-diacylglycerol cysteine attachment. Residues 177–196 (SSGKTQVSQTSSGSNQQKTL) are compositionally biased toward polar residues. Disordered stretches follow at residues 177-208 (SSGK…SDSS), 220-257 (AKNN…DKKI), and 466-506 (KSTD…ENNS). The segment covering 220-231 (AKNNGKKANNSK) has biased composition (low complexity). Residues 238-250 (DQSTQTHNDQGDA) are compositionally biased toward polar residues.

The protein belongs to the MG185/MG260 family.

It localises to the cell membrane. This is an uncharacterized protein from Mycoplasma pneumoniae (strain ATCC 29342 / M129 / Subtype 1) (Mycoplasmoides pneumoniae).